A 204-amino-acid chain; its full sequence is Large ribosomal subunit protein bL25 (204 aa).

The protein belongs to the bacterial ribosomal protein bL25 family. CTC subfamily. As to quaternary structure, part of the 50S ribosomal subunit; part of the 5S rRNA/L5/L18/L25 subcomplex. Contacts the 5S rRNA. Binds to the 5S rRNA independently of L5 and L18.

Its function is as follows. This is one of the proteins that binds to the 5S RNA in the ribosome where it forms part of the central protuberance. The protein is Large ribosomal subunit protein bL25 of Wolbachia sp. subsp. Brugia malayi (strain TRS).